Reading from the N-terminus, the 494-residue chain is Glycerol kinase (494 aa).

Thr13 is a binding site for ADP. Thr13, Thr14, and Ser15 together coordinate ATP. Thr13 lines the sn-glycerol 3-phosphate pocket. Arg17 contributes to the ADP binding site. Sn-glycerol 3-phosphate-binding residues include Arg83, Glu84, Tyr135, and Asp244. Glycerol-binding residues include Arg83, Glu84, Tyr135, Asp244, and Gln245. ADP contacts are provided by Thr266 and Gly309. Positions 266, 309, 313, and 410 each coordinate ATP. Positions 410 and 414 each coordinate ADP.

This sequence belongs to the FGGY kinase family.

It carries out the reaction glycerol + ATP = sn-glycerol 3-phosphate + ADP + H(+). The protein operates within polyol metabolism; glycerol degradation via glycerol kinase pathway; sn-glycerol 3-phosphate from glycerol: step 1/1. Inhibited by fructose 1,6-bisphosphate (FBP). Functionally, key enzyme in the regulation of glycerol uptake and metabolism. Catalyzes the phosphorylation of glycerol to yield sn-glycerol 3-phosphate. This is Glycerol kinase from Shewanella baltica (strain OS223).